The chain runs to 623 residues: tRNA 5-methylaminomethyl-2-thiouridine biosynthesis bifunctional protein MnmC (623 aa).

The interval 1 to 244 (MCVSSSIQTA…KREMLKAIWP (244 aa)) is tRNA (mnm(5)s(2)U34)-methyltransferase. The interval 268 to 623 (IGAGIAGLHC…VKIKKPYYSS (356 aa)) is FAD-dependent cmnm(5)s(2)U34 oxidoreductase.

The protein in the N-terminal section; belongs to the methyltransferase superfamily. tRNA (mnm(5)s(2)U34)-methyltransferase family. In the C-terminal section; belongs to the DAO family. FAD is required as a cofactor.

It localises to the cytoplasm. It carries out the reaction 5-aminomethyl-2-thiouridine(34) in tRNA + S-adenosyl-L-methionine = 5-methylaminomethyl-2-thiouridine(34) in tRNA + S-adenosyl-L-homocysteine + H(+). Catalyzes the last two steps in the biosynthesis of 5-methylaminomethyl-2-thiouridine (mnm(5)s(2)U) at the wobble position (U34) in tRNA. Catalyzes the FAD-dependent demodification of cmnm(5)s(2)U34 to nm(5)s(2)U34, followed by the transfer of a methyl group from S-adenosyl-L-methionine to nm(5)s(2)U34, to form mnm(5)s(2)U34. In Acinetobacter baylyi (strain ATCC 33305 / BD413 / ADP1), this protein is tRNA 5-methylaminomethyl-2-thiouridine biosynthesis bifunctional protein MnmC.